A 174-amino-acid chain; its full sequence is ATP-dependent protease subunit HslV (174 aa).

T2 is an active-site residue. Na(+) contacts are provided by G157, C160, and T163.

The protein belongs to the peptidase T1B family. HslV subfamily. In terms of assembly, a double ring-shaped homohexamer of HslV is capped on each side by a ring-shaped HslU homohexamer. The assembly of the HslU/HslV complex is dependent on binding of ATP.

It is found in the cytoplasm. It catalyses the reaction ATP-dependent cleavage of peptide bonds with broad specificity.. Allosterically activated by HslU binding. Functionally, protease subunit of a proteasome-like degradation complex believed to be a general protein degrading machinery. The protein is ATP-dependent protease subunit HslV of Cellvibrio japonicus (strain Ueda107) (Pseudomonas fluorescens subsp. cellulosa).